Consider the following 627-residue polypeptide: Protein fem-1 homolog B (627 aa).

ANK repeat units lie at residues 45–74 (QRST…VQTQ), 87–116 (DGAT…NVNH), 120–149 (TNST…NISI), and 153–182 (YDNT…DPNA). Residues histidine 185, cysteine 186, and histidine 218 each contribute to the Zn(2+) site. ANK repeat units follow at residues 186 to 215 (CGAT…AIVV) and 218 to 248 (HGMT…DRRS). The TPR repeat unit spans residues 344 to 377 (SHPIIYRGAVYADNMEFEQCIKLWLHALHLRQKG). ANK repeat units lie at residues 483-527 (EGFT…EVNA) and 531-568 (EGNS…HTDM).

This sequence belongs to the fem-1 family. In terms of assembly, component of a CRL2 E3 ubiquitin-protein ligase complex, also named ECS (Elongin BC-CUL2/5-SOCS-box protein) complex, composed of CUL2, Elongin BC (ELOB and ELOC), RBX1 and substrate-specific adapter FEM1B. Homooligomer. Interacts with PPM1F and PHTF1. Interacts with the death domain of FAS/TNFRSF6 and TNFRSF1A. Interacts with CHEK1. Interacts with NKX3-1. As to expression, widely expressed. Highly expressed in testis. Weakly expressed in other tissues.

The protein localises to the cytoplasm. It localises to the nucleus. Its pathway is protein modification; protein ubiquitination. With respect to regulation, activity of the CRL2(FEM1B) complex toward FNIP1 is inhibited by BEX family proteins (BEX1, BEX2, BEX3, BEX4 and/or BEX5) in absence of reductive stress. Mechanistically, BEX proteins act as pseudosubstrate inhibitors that associate with FEM1B via zinc in absence of reductive stress, thereby preventing association between FEM1B and FNIP1. Its function is as follows. Substrate-recognition component of a Cul2-RING (CRL2) E3 ubiquitin-protein ligase complex of the DesCEND (destruction via C-end degrons) pathway, which recognizes a C-degron located at the extreme C terminus of target proteins, leading to their ubiquitination and degradation. The C-degron recognized by the DesCEND pathway is usually a motif of less than ten residues and can be present in full-length proteins, truncated proteins or proteolytically cleaved forms. The CRL2(FEM1B) complex specifically recognizes proteins ending with -Gly-Leu-Asp-Arg, such as CDK5R1, leading to their ubiquitination and degradation. Also acts as a regulator of the reductive stress response by mediating ubiquitination of reduced FNIP1: in response to reductive stress, the CRL2(FEM1B) complex specifically recognizes a conserved Cys degron in FNIP1 when this degron is reduced, leading to FNIP1 degradation and subsequent activation of mitochondria to recalibrate reactive oxygen species (ROS). Mechanistically, recognizes and binds reduced FNIP1 through two interface zinc ions, which act as a molecular glue that recruit reduced FNIP1 to FEM1B. Promotes ubiquitination of GLI1, suppressing GLI1 transcriptional activator activity. Promotes ubiquitination and degradation of ANKRD37. Promotes ubiquitination and degradation of SLBP. Involved in apoptosis by acting as a death receptor-associated protein that mediates apoptosis. Also involved in glucose homeostasis in pancreatic islet. May also act as an adapter/mediator in replication stress-induced signaling that leads to the activation of CHEK1. The polypeptide is Protein fem-1 homolog B (Homo sapiens (Human)).